A 626-amino-acid polypeptide reads, in one-letter code: Endogenous retrovirus group S71 member 1 Env polyprotein (626 aa).

Positions 1 to 38 (MGPEAWVRPLKTAPKPGEAIRLILFIYLSCFFLPVMSS) are cleaved as a signal peptide. The tract at residues 39-438 (EPSYSFLLTS…PPELHPRLHQ (400 aa)) is surface protein. At 39 to 575 (EPSYSFLLTS…FNWNPWLTTL (537 aa)) the chain is on the extracellular side. The short motif at 302–305 (CWLC) is the CXXC element. A fusion peptide region spans residues 439 to 459 (AVPLLVPLLAGLSIAGSAAIG). The tract at residues 439 to 626 (AVPLLVPLLA…KTQYDTLVNN (188 aa)) is transmembrane protein. Residues 503-519 (LQNCRCLDLLFLSQGGL) carry the CKS-17 motif. Residues Cys520 and Cys527 are joined by a disulfide bond. Residues 520-528 (CAALGESCC) carry the CX6CC motif. Residues 576–596 (ITGLAGPLLILLLSLIFGPCI) form a helical membrane-spanning segment. The Cytoplasmic portion of the chain corresponds to 597–626 (LNSFLNFIKQRIASVKLTYLKTQYDTLVNN).

Belongs to the gamma type-C retroviral envelope protein family. HERV class-I T env subfamily. The CXXC motif is highly conserved across a broad range of retroviral envelope proteins. It is thought to participate in the formation of a labile disulfide bond possibly with the CX6CC motif present in the transmembrane domain. As to expression, expressed at higher level in thyroid. Expressed at lower level in adrenal, bone marrow, brain, breast, kidney, ovary, placenta, prostate, skin, testis and trachea.

It is found in the cell membrane. Its function is as follows. Retroviral envelope proteins mediate receptor recognition and membrane fusion during early infection. Endogenous envelope proteins may have kept, lost or modified their original function during evolution. This endogenous envelope protein has lost its original fusogenic properties. The protein is Endogenous retrovirus group S71 member 1 Env polyprotein (ERVS71-1) of Homo sapiens (Human).